Consider the following 198-residue polypeptide: Dermorphin-2 (198 aa).

Residues 1-20 (MSFLKKSLLLILFLGLVSLS) form the signal peptide. A propeptide spanning residues 21–45 (VCKEEKRVSEEENENEENHEEGSEM) is cleaved from the precursor. Residues 24-198 (EEKRVSEEEN…AFGYPSGEAK (175 aa)) form a disordered region. D-alanine (Ala) is present on Ala-49. Ser-54 carries the post-translational modification Serine amide. A compositionally biased stretch (basic and acidic residues) spans 56-65 (EAKKIKRESE). Positions 56-80 (EAKKIKRESEEEKEIEENHEEGSEM) are excised as a propeptide. At Ala-84 the chain carries D-alanine (Ala). Position 89 is a serine amide (Ser-89). Positions 91 to 115 (EAKKIKRESEEENENEENHEEGSEM) are excised as a propeptide. Over residues 100–109 (EEENENEENH) the composition is skewed to acidic residues. Residue Ala-119 is modified to D-alanine (Ala). At Ser-124 the chain carries Serine amide. Over residues 126 to 135 (EAKKIKRESE) the composition is skewed to basic and acidic residues. The propeptide occupies 126-150 (EAKKIKRESEEEKEIEENHEEGSEM). A D-alanine (Ala) modification is found at Ala-154. Ser-159 is modified (serine amide). The propeptide occupies 161–185 (EAKKIKRESEEENENEENHEEGSEM). Acidic residues predominate over residues 170–179 (EEENENEENH). Residue Ala-189 is modified to D-alanine (Ala). Ser-194 is subject to Serine amide. A propeptide spanning residues 196–198 (EAK) is cleaved from the precursor.

The protein belongs to the frog skin active peptide (FSAP) family. Dermorphin subfamily. Expressed by the skin glands.

It localises to the secreted. In terms of biological role, dermorphin has a very potent opiate-like activity. It has high affinity and selectivity for mu-type opioid receptors. In Phyllomedusa sauvagei (Sauvage's leaf frog), this protein is Dermorphin-2.